The chain runs to 323 residues: AA9 family lytic polysaccharide monooxygenase A (323 aa).

An N-terminal signal peptide occupies residues 1–19 (MKSFISLLGLSFLTCHASA). The Cu(2+) site is built by His-20 and His-90. Cys-59 and Cys-175 are disulfide-bonded. O2 is bound by residues His-161 and Gln-170. Tyr-172 contacts Cu(2+). Residue Asn-215 is glycosylated (N-linked (GlcNAc...) asparagine). In terms of domain architecture, CBM1 spans 287–323 (AVVQKFGQCGGQGWTGGTTCVAGSTCTATNAYYSQCL).

Belongs to the polysaccharide monooxygenase AA9 family. Requires Cu(2+) as cofactor.

Its subcellular location is the secreted. It catalyses the reaction [(1-&gt;4)-beta-D-glucosyl]n+m + reduced acceptor + O2 = 4-dehydro-beta-D-glucosyl-[(1-&gt;4)-beta-D-glucosyl]n-1 + [(1-&gt;4)-beta-D-glucosyl]m + acceptor + H2O.. Lytic polysaccharide monooxygenase (LPMO) that depolymerizes crystalline and amorphous polysaccharides via the oxidation of scissile alpha- or beta-(1-4)-glycosidic bonds, yielding C1 and C4 oxidation products. Catalysis by LPMOs requires the reduction of the active-site copper from Cu(II) to Cu(I) by a reducing agent and H(2)O(2) or O(2) as a cosubstrate. The chain is AA9 family lytic polysaccharide monooxygenase A from Botryotinia fuckeliana (strain B05.10) (Noble rot fungus).